A 446-amino-acid polypeptide reads, in one-letter code: D(1A) dopamine receptor (446 aa).

Topologically, residues 1–22 (MAPNTSTMDEAGLPAERDFSFR) are extracellular. A glycan (N-linked (GlcNAc...) asparagine) is linked at Asn4. The chain crosses the membrane as a helical span at residues 23 to 48 (ILTACFLSLLILSTLLGNTLVCAAVI). Residues 49–59 (RFRHLRSKVTN) are Cytoplasmic-facing. Residues 60–86 (FFVISLAVSDLLVAVLVMPWKAVAEIA) form a helical membrane-spanning segment. Over 87 to 95 (GFWPLGPFC) the chain is Extracellular. A disulfide bridge links Cys95 with Cys186. Residues 96–118 (NIWVAFDIMCSTASILNLCVISV) form a helical membrane-spanning segment. Over 119–137 (DRYWAISSPFQYERKMTPK) the chain is Cytoplasmic. Residues 138–162 (AAFILISVAWTLSVLISFIPVQLSW) traverse the membrane as a helical segment. Residues 163–192 (HKAKPTWPLDGNFTSLEDTEDDNCDTRLSR) lie on the Extracellular side of the membrane. The helical transmembrane segment at 193–218 (TYAISSSLISFYIPVAIMIVTYTSIY) threads the bilayer. The Cytoplasmic segment spans residues 219–272 (RIAQKQIRRISALERAAVHAKNCQTTAGNGNPVECAQSESSFKMSFKRETKVLK). The helical transmembrane segment at 273-299 (TLSVIMGVFVCCWLPFFISNCMVPFCG) threads the bilayer. Over 300–312 (SEETQPFCIDSIT) the chain is Extracellular. Residues 313 to 337 (FDVFVWFGWANSSLNPIIYAFNADF) form a helical membrane-spanning segment. Residues 338–446 (QKAFSTLLGC…PVTHSGQHST (109 aa)) lie on the Cytoplasmic side of the membrane. 2 S-palmitoyl cysteine lipidation sites follow: Cys347 and Cys351.

It belongs to the G-protein coupled receptor 1 family. Interacts with DNAJC14 via its C-terminus PubMed:11331877. Interacts with DRD2. Interacts with DORIP1. Post-translationally, N-glycosylated. As to expression, brain, in the striatum, the nucleus accumbens, and the olfactory tubercle.

It localises to the cell membrane. Its subcellular location is the endoplasmic reticulum membrane. It is found in the cell projection. The protein localises to the dendrite. The protein resides in the cilium membrane. It localises to the dendritic spine. Its function is as follows. Dopamine receptor whose activity is mediated by G proteins which activate adenylyl cyclase. The sequence is that of D(1A) dopamine receptor (Drd1) from Rattus norvegicus (Rat).